A 305-amino-acid chain; its full sequence is Ribosomal RNA small subunit methyltransferase H (305 aa).

S-adenosyl-L-methionine contacts are provided by residues 30–32, D49, F74, D96, and Q103; that span reads GGH.

This sequence belongs to the methyltransferase superfamily. RsmH family.

It is found in the cytoplasm. The enzyme catalyses cytidine(1402) in 16S rRNA + S-adenosyl-L-methionine = N(4)-methylcytidine(1402) in 16S rRNA + S-adenosyl-L-homocysteine + H(+). Functionally, specifically methylates the N4 position of cytidine in position 1402 (C1402) of 16S rRNA. The polypeptide is Ribosomal RNA small subunit methyltransferase H (Francisella tularensis subsp. novicida (strain U112)).